The chain runs to 361 residues: Tetraacyldisaccharide 4'-kinase (361 aa).

Position 49–56 (49–56) interacts with ATP; that stretch reads TTGGTGKT.

Belongs to the LpxK family.

The enzyme catalyses a lipid A disaccharide + ATP = a lipid IVA + ADP + H(+). It functions in the pathway glycolipid biosynthesis; lipid IV(A) biosynthesis; lipid IV(A) from (3R)-3-hydroxytetradecanoyl-[acyl-carrier-protein] and UDP-N-acetyl-alpha-D-glucosamine: step 6/6. Functionally, transfers the gamma-phosphate of ATP to the 4'-position of a tetraacyldisaccharide 1-phosphate intermediate (termed DS-1-P) to form tetraacyldisaccharide 1,4'-bis-phosphate (lipid IVA). This is Tetraacyldisaccharide 4'-kinase from Chlorobaculum parvum (strain DSM 263 / NCIMB 8327) (Chlorobium vibrioforme subsp. thiosulfatophilum).